We begin with the raw amino-acid sequence, 215 residues long: Pyrrolidone-carboxylate peptidase (215 aa).

Catalysis depends on residues Glu-78, Cys-141, and His-165.

The protein belongs to the peptidase C15 family. As to quaternary structure, homotetramer.

Its subcellular location is the cytoplasm. The enzyme catalyses Release of an N-terminal pyroglutamyl group from a polypeptide, the second amino acid generally not being Pro.. Functionally, removes 5-oxoproline from various penultimate amino acid residues except L-proline. In Lactobacillus johnsonii (strain CNCM I-12250 / La1 / NCC 533), this protein is Pyrrolidone-carboxylate peptidase.